A 226-amino-acid polypeptide reads, in one-letter code: Transcription repressor OFP12 (226 aa).

Low complexity predominate over residues 68 to 87; that stretch reads SSTFTASTSTAANSSSSSAS. Residues 68-104 are disordered; it reads SSTFTASTSTAANSSSSSASYDDSDNYGFAPDDDSPP. An OVATE domain is found at 152–217; the sequence is VKHYVQSPDP…IRAFADILVS (66 aa).

As to quaternary structure, interacts with KNAT1, KNAT2, KNAT3 and KNAT4. Expressed in roots, shoots, stems, flower buds and siliques.

It localises to the nucleus. In terms of biological role, transcriptional repressor that regulates multiple aspects of plant growth and development through the regulation of BEL1-LIKE (BLH) and KNOX TALE (KNAT) homeodomain transcription factors. This is Transcription repressor OFP12 (OFP12) from Arabidopsis thaliana (Mouse-ear cress).